The chain runs to 334 residues: N-acetyl-gamma-glutamyl-phosphate reductase (334 aa).

C154 is a catalytic residue.

Belongs to the NAGSA dehydrogenase family. Type 1 subfamily.

It localises to the cytoplasm. It carries out the reaction N-acetyl-L-glutamate 5-semialdehyde + phosphate + NADP(+) = N-acetyl-L-glutamyl 5-phosphate + NADPH + H(+). It functions in the pathway amino-acid biosynthesis; L-arginine biosynthesis; N(2)-acetyl-L-ornithine from L-glutamate: step 3/4. Functionally, catalyzes the NADPH-dependent reduction of N-acetyl-5-glutamyl phosphate to yield N-acetyl-L-glutamate 5-semialdehyde. This Salmonella typhimurium (strain LT2 / SGSC1412 / ATCC 700720) protein is N-acetyl-gamma-glutamyl-phosphate reductase.